The chain runs to 358 residues: Phosphoserine aminotransferase (358 aa).

Arg41 lines the L-glutamate pocket. Residues 75–76, Trp100, Thr148, Asp167, and Gln190 each bind pyridoxal 5'-phosphate; that span reads AS. Residue Lys191 is modified to N6-(pyridoxal phosphate)lysine. 233-234 lines the pyridoxal 5'-phosphate pocket; sequence NT.

Belongs to the class-V pyridoxal-phosphate-dependent aminotransferase family. SerC subfamily. As to quaternary structure, homodimer. Requires pyridoxal 5'-phosphate as cofactor.

The protein localises to the cytoplasm. The catalysed reaction is O-phospho-L-serine + 2-oxoglutarate = 3-phosphooxypyruvate + L-glutamate. The enzyme catalyses 4-(phosphooxy)-L-threonine + 2-oxoglutarate = (R)-3-hydroxy-2-oxo-4-phosphooxybutanoate + L-glutamate. It functions in the pathway amino-acid biosynthesis; L-serine biosynthesis; L-serine from 3-phospho-D-glycerate: step 2/3. The protein operates within cofactor biosynthesis; pyridoxine 5'-phosphate biosynthesis; pyridoxine 5'-phosphate from D-erythrose 4-phosphate: step 3/5. Functionally, catalyzes the reversible conversion of 3-phosphohydroxypyruvate to phosphoserine and of 3-hydroxy-2-oxo-4-phosphonooxybutanoate to phosphohydroxythreonine. The polypeptide is Phosphoserine aminotransferase (Campylobacter lari (strain RM2100 / D67 / ATCC BAA-1060)).